Consider the following 67-residue polypeptide: Small ribosomal subunit protein eS27 (67 aa).

Zn(2+)-binding residues include Cys-22, Cys-25, Cys-41, and Cys-44. Residues 22–44 form a C4-type zinc finger; that stretch reads CPDCGNEQITFSHAAMVVRCLVC.

It belongs to the eukaryotic ribosomal protein eS27 family. As to quaternary structure, part of the 30S ribosomal subunit. The cofactor is Zn(2+).

This chain is Small ribosomal subunit protein eS27, found in Pyrobaculum aerophilum (strain ATCC 51768 / DSM 7523 / JCM 9630 / CIP 104966 / NBRC 100827 / IM2).